Here is a 357-residue protein sequence, read N- to C-terminus: uncharacterized protein (357 aa).

This is an uncharacterized protein from Mycobacterium bovis (strain ATCC BAA-935 / AF2122/97).